We begin with the raw amino-acid sequence, 611 residues long: tRNA uridine 5-carboxymethylaminomethyl modification enzyme MnmG (611 aa).

An FAD-binding site is contributed by 14–19 (GAGHAG). 274–288 (GPRYCPSIEDKIVKF) is a binding site for NAD(+).

Belongs to the MnmG family. In terms of assembly, homodimer. Heterotetramer of two MnmE and two MnmG subunits. Requires FAD as cofactor.

The protein resides in the cytoplasm. Functionally, NAD-binding protein involved in the addition of a carboxymethylaminomethyl (cmnm) group at the wobble position (U34) of certain tRNAs, forming tRNA-cmnm(5)s(2)U34. This Chlamydia felis (strain Fe/C-56) (Chlamydophila felis) protein is tRNA uridine 5-carboxymethylaminomethyl modification enzyme MnmG.